We begin with the raw amino-acid sequence, 452 residues long: UDP-N-acetylmuramoylalanine--D-glutamate ligase (452 aa).

115-121 (GTNGKTT) lines the ATP pocket.

It belongs to the MurCDEF family.

It is found in the cytoplasm. The catalysed reaction is UDP-N-acetyl-alpha-D-muramoyl-L-alanine + D-glutamate + ATP = UDP-N-acetyl-alpha-D-muramoyl-L-alanyl-D-glutamate + ADP + phosphate + H(+). It functions in the pathway cell wall biogenesis; peptidoglycan biosynthesis. Cell wall formation. Catalyzes the addition of glutamate to the nucleotide precursor UDP-N-acetylmuramoyl-L-alanine (UMA). This chain is UDP-N-acetylmuramoylalanine--D-glutamate ligase, found in Elusimicrobium minutum (strain Pei191).